Consider the following 432-residue polypeptide: D-amino acid dehydrogenase (432 aa).

Position 3 to 17 (3 to 17 (VVILGSGVVGVTSAW)) interacts with FAD.

The protein belongs to the DadA oxidoreductase family. The cofactor is FAD.

It carries out the reaction a D-alpha-amino acid + A + H2O = a 2-oxocarboxylate + AH2 + NH4(+). The protein operates within amino-acid degradation; D-alanine degradation; NH(3) and pyruvate from D-alanine: step 1/1. Functionally, oxidative deamination of D-amino acids. The sequence is that of D-amino acid dehydrogenase from Salmonella choleraesuis (strain SC-B67).